The following is a 682-amino-acid chain: Potassium-transporting ATPase ATP-binding subunit (682 aa).

4 helical membrane-spanning segments follow: residues 34–54 (PVMFVVWAGSVLTTLLTLAMV), 58–78 (IAGSALFTGVISLWLWFTVLF), 219–239 (IALTILLIALTIVFLLATATL), and 254–274 (VLVALLVCLIPTTIGGLLSAI). Aspartate 307 acts as the 4-aspartylphosphate intermediate in catalysis. ATP-binding positions include aspartate 344, glutamate 348, 377–384 (FTAQSRMS), and lysine 395. Aspartate 518 and aspartate 522 together coordinate Mg(2+). Transmembrane regions (helical) follow at residues 588-608 (FAIIPAAFAATYPQLNALNVM), 616-636 (AILSAVIFNALIIIFLIPLAL), and 662-682 (LVVPFIGIKVIDVLLTLLGLA).

Belongs to the cation transport ATPase (P-type) (TC 3.A.3) family. Type IA subfamily. The system is composed of three essential subunits: KdpA, KdpB and KdpC.

The protein resides in the cell inner membrane. It catalyses the reaction K(+)(out) + ATP + H2O = K(+)(in) + ADP + phosphate + H(+). In terms of biological role, part of the high-affinity ATP-driven potassium transport (or Kdp) system, which catalyzes the hydrolysis of ATP coupled with the electrogenic transport of potassium into the cytoplasm. This subunit is responsible for energy coupling to the transport system and for the release of the potassium ions to the cytoplasm. The protein is Potassium-transporting ATPase ATP-binding subunit of Salmonella paratyphi B (strain ATCC BAA-1250 / SPB7).